An 832-amino-acid chain; its full sequence is G-type lectin S-receptor-like serine/threonine-protein kinase RLK1 (832 aa).

Residues 1-24 (MGSLSCSIIHLVLILQLQTFFVFS) form the signal peptide. Topologically, residues 25–461 (QNIRNGSVPV…VPVTGNRAKK (437 aa)) are extracellular. N-linked (GlcNAc...) asparagine glycans are attached at residues Asn29, Asn92, Asn100, Asn178, Asn240, and Asn251. Residues 37 to 157 (SLTASESQQI…GSEDSDEVLW (121 aa)) form the Bulb-type lectin domain. Residues 299 to 349 (RDNMCSPDDALGNMACGYNNICSLGNNKRPKCECPERFVLKDPSNEYGDCL) enclose the EGF-like; atypical domain. 3 disulfide bridges follow: Cys303-Cys320, Cys314-Cys330, and Cys332-Cys348. Residues 357–446 (CRPENQTANS…DSDTFIKVRN (90 aa)) form the PAN domain. N-linked (GlcNAc...) asparagine glycosylation is present at Asn361. 2 cysteine pairs are disulfide-bonded: Cys397-Cys420 and Cys401-Cys407. The N-linked (GlcNAc...) asparagine glycan is linked to Asn446. The chain crosses the membrane as a helical span at residues 462–482 (LDWLIIACSVLLGTSAFVIFD). The Cytoplasmic segment spans residues 483–832 (TSCSYRKTKK…SLSSDPVSLV (350 aa)). A Protein kinase domain is found at 531-803 (RDFTEELGRG…NVTQMLEGVI (273 aa)). ATP is bound by residues 537–545 (LGRGAFGIV) and Lys563. The tract at residues 622–638 (RRPRPSWEDRKNIAVAI) is caM-binding. Asp657 functions as the Proton acceptor in the catalytic mechanism.

The protein belongs to the protein kinase superfamily. Ser/Thr protein kinase family.

It localises to the cell membrane. The catalysed reaction is L-seryl-[protein] + ATP = O-phospho-L-seryl-[protein] + ADP + H(+). The enzyme catalyses L-threonyl-[protein] + ATP = O-phospho-L-threonyl-[protein] + ADP + H(+). The sequence is that of G-type lectin S-receptor-like serine/threonine-protein kinase RLK1 (RLK1) from Arabidopsis thaliana (Mouse-ear cress).